The chain runs to 188 residues: Phosphatidylcholine-sterol acyltransferase (188 aa).

The N-linked (GlcNAc...) asparagine glycan is linked to N20. The active-site Charge relay system is the H169.

Belongs to the AB hydrolase superfamily. Lipase family. As to expression, detected in blood plasma (at protein level).

It localises to the secreted. It carries out the reaction a sterol + a 1,2-diacyl-sn-glycero-3-phosphocholine = a sterol ester + a 1-acyl-sn-glycero-3-phosphocholine. It catalyses the reaction a 1-O-alkyl-2-acetyl-sn-glycero-3-phosphocholine + H2O = a 1-O-alkyl-sn-glycero-3-phosphocholine + acetate + H(+). The catalysed reaction is a 1-hexadecanoyl-2-acyl-sn-glycero-3-phosphocholine + (24S)-hydroxycholesterol = (24S)-24-hydroxycholesterol ester + 1-hexadecanoyl-sn-glycero-3-phosphocholine. The enzyme catalyses (24S)-hydroxycholesterol + 1-hexadecanoyl-2-(9Z,12Z-octadecadienoyl)-sn-glycero-3-phosphocholine = (24S)-hydroxycholesterol 3-linoleoate + 1-hexadecanoyl-sn-glycero-3-phosphocholine. It carries out the reaction 1-hexadecanoyl-2-(5Z,8Z,11Z,14Z-eicosatetraenoyl)-sn-glycero-3-phosphocholine + cholesterol = cholesteryl (5Z,8Z,11Z,14Z)-eicosatetraenoate + 1-hexadecanoyl-sn-glycero-3-phosphocholine. It catalyses the reaction 1-hexadecanoyl-2-(9Z-octadecenoyl)-sn-glycero-3-phosphocholine + cholesterol = cholesteryl (9Z-octadecenoate) + 1-hexadecanoyl-sn-glycero-3-phosphocholine. The catalysed reaction is 1-hexadecanoyl-2-(8Z,11Z,14Z-eicosatrienoyl)-sn-glycero-3-phosphocholine + cholesterol = cholesteryl (8Z,11Z,14Z)-eicosatrienoate + 1-hexadecanoyl-sn-glycero-3-phosphocholine. The enzyme catalyses 1-hexadecanoyl-2-(5Z,8Z,11Z-eicosatrienoyl)-sn-glycero-3-phosphocholine + cholesterol = cholesteryl (5Z,8Z,11Z)-eicosatrienoate + 1-hexadecanoyl-sn-glycero-3-phosphocholine. It carries out the reaction 1-hexadecanoyl-2-(5Z,8Z,11Z,14Z,17Z-eicosapentaenoyl)-sn-glycero-3-phosphocholine + cholesterol = (5Z,8Z,11Z,14Z,17Z-eicosapentaenoyl)-cholesterol + 1-hexadecanoyl-sn-glycero-3-phosphocholine. It catalyses the reaction 1-hexadecanoyl-2-(9Z,12Z-octadecadienoyl)-sn-glycero-3-phosphocholine + cholesterol = cholesteryl (9Z,12Z)-octadecadienoate + 1-hexadecanoyl-sn-glycero-3-phosphocholine. The catalysed reaction is 1-hexadecanoyl-2-(6Z,9Z,12Z-octadecatrienoyl)-sn-glycero-3-phosphocholine + cholesterol = (6Z,9Z,12Z-octadecatrienoyl)-cholesterol + 1-hexadecanoyl-sn-glycero-3-phosphocholine. The enzyme catalyses 1-hexadecanoyl-2-(11Z,14Z,17Z-eicosatrienoyl)-sn-glycero-3-phosphocholine + cholesterol = (11Z,14Z,17Z-eicosatrienoyl)-cholesterol + 1-hexadecanoyl-sn-glycero-3-phosphocholine. It carries out the reaction 1-hexadecanoyl-2-(9Z,12Z,15Z-octadecatrienoyl)-sn-glycero-3-phosphocholine + cholesterol = (9Z,12Z,15Z-octadecatrienoyl)-cholesterol + 1-hexadecanoyl-sn-glycero-3-phosphocholine. It catalyses the reaction 1-hexadecanoyl-2-(9Z,12Z-octadecadienoyl)-sn-glycero-3-phosphocholine + H2O = (9Z,12Z)-octadecadienoate + 1-hexadecanoyl-sn-glycero-3-phosphocholine + H(+). The catalysed reaction is 1-hexadecanoyl-2-(5Z,8Z,11Z,14Z-eicosatetraenoyl)-sn-glycero-3-phosphocholine + H2O = 1-hexadecanoyl-sn-glycero-3-phosphocholine + (5Z,8Z,11Z,14Z)-eicosatetraenoate + H(+). The enzyme catalyses a 1-O-alkyl-2-acetyl-sn-glycero-3-phosphocholine + 1-hexadecanoyl-sn-glycero-3-phosphocholine = 1-hexadecanoyl-2-acetyl-sn-glycero-3-phosphocholine + a 1-O-alkyl-sn-glycero-3-phosphocholine. In terms of biological role, central enzyme in the extracellular metabolism of plasma lipoproteins. Synthesized mainly in the liver and secreted into plasma where it converts cholesterol and phosphatidylcholines (lecithins) to cholesteryl esters and lysophosphatidylcholines on the surface of high and low density lipoproteins (HDLs and LDLs). The cholesterol ester is then transported back to the liver. Also produced in the brain by primary astrocytes, and esterifies free cholesterol on nascent APOE-containing lipoproteins secreted from glia and influences cerebral spinal fluid (CSF) APOE- and APOA1 levels. Together with APOE and the cholesterol transporter ABCA1, plays a key role in the maturation of glial-derived, nascent lipoproteins. Required for remodeling high-density lipoprotein particles into their spherical forms. Has a preference for plasma 16:0-18:2 or 18:O-18:2 phosphatidylcholines. Catalyzes the hydrolysis of 1-O-alkyl-2-acetyl-sn-glycero-3-phosphocholine (platelet-activating factor or PAF) to 1-O-alkyl-sn-glycero-3-phosphocholine (lyso-PAF). Also catalyzes the transfer of the acetate group from PAF to 1-hexadecanoyl-sn-glycero-3-phosphocholine forming lyso-PAF. Catalyzes the esterification of (24S)-hydroxycholesterol (24(S)OH-C), also known as cerebrosterol to produce 24(S)OH-C monoesters. The protein is Phosphatidylcholine-sterol acyltransferase (LCAT) of Sus scrofa (Pig).